We begin with the raw amino-acid sequence, 363 residues long: Flagellar P-ring protein 2 (363 aa).

The signal sequence occupies residues Met1–Ala18.

The protein belongs to the FlgI family. As to quaternary structure, the basal body constitutes a major portion of the flagellar organelle and consists of four rings (L,P,S, and M) mounted on a central rod.

It localises to the periplasm. The protein resides in the bacterial flagellum basal body. Its function is as follows. Assembles around the rod to form the L-ring and probably protects the motor/basal body from shearing forces during rotation. The chain is Flagellar P-ring protein 2 from Cereibacter sphaeroides (strain ATCC 17023 / DSM 158 / JCM 6121 / CCUG 31486 / LMG 2827 / NBRC 12203 / NCIMB 8253 / ATH 2.4.1.) (Rhodobacter sphaeroides).